A 207-amino-acid chain; its full sequence is Thiamine-phosphate synthase (207 aa).

4-amino-2-methyl-5-(diphosphooxymethyl)pyrimidine-binding positions include 38–42 (QYRAK) and Asn-70. Residues Asp-71 and Asp-90 each coordinate Mg(2+). Residue Thr-109 participates in 4-amino-2-methyl-5-(diphosphooxymethyl)pyrimidine binding. Residue 135 to 137 (TNS) coordinates 2-[(2R,5Z)-2-carboxy-4-methylthiazol-5(2H)-ylidene]ethyl phosphate. 4-amino-2-methyl-5-(diphosphooxymethyl)pyrimidine is bound at residue Lys-138. 2-[(2R,5Z)-2-carboxy-4-methylthiazol-5(2H)-ylidene]ethyl phosphate contacts are provided by residues Gly-165 and 185–186 (IS).

It belongs to the thiamine-phosphate synthase family. The cofactor is Mg(2+).

The enzyme catalyses 2-[(2R,5Z)-2-carboxy-4-methylthiazol-5(2H)-ylidene]ethyl phosphate + 4-amino-2-methyl-5-(diphosphooxymethyl)pyrimidine + 2 H(+) = thiamine phosphate + CO2 + diphosphate. The catalysed reaction is 2-(2-carboxy-4-methylthiazol-5-yl)ethyl phosphate + 4-amino-2-methyl-5-(diphosphooxymethyl)pyrimidine + 2 H(+) = thiamine phosphate + CO2 + diphosphate. It carries out the reaction 4-methyl-5-(2-phosphooxyethyl)-thiazole + 4-amino-2-methyl-5-(diphosphooxymethyl)pyrimidine + H(+) = thiamine phosphate + diphosphate. It functions in the pathway cofactor biosynthesis; thiamine diphosphate biosynthesis; thiamine phosphate from 4-amino-2-methyl-5-diphosphomethylpyrimidine and 4-methyl-5-(2-phosphoethyl)-thiazole: step 1/1. Its function is as follows. Condenses 4-methyl-5-(beta-hydroxyethyl)thiazole monophosphate (THZ-P) and 2-methyl-4-amino-5-hydroxymethyl pyrimidine pyrophosphate (HMP-PP) to form thiamine monophosphate (TMP). The sequence is that of Thiamine-phosphate synthase from Clostridium perfringens (strain 13 / Type A).